Consider the following 647-residue polypeptide: 1-deoxy-D-xylulose-5-phosphate synthase (647 aa).

Residues His88 and 129-131 (GHA) contribute to the thiamine diphosphate site. Asp160 is a binding site for Mg(2+). Thiamine diphosphate is bound by residues 161-162 (GA), Asn189, Tyr300, and Glu377. Asn189 is a Mg(2+) binding site.

It belongs to the transketolase family. DXPS subfamily. Homodimer. Mg(2+) serves as cofactor. Requires thiamine diphosphate as cofactor.

The catalysed reaction is D-glyceraldehyde 3-phosphate + pyruvate + H(+) = 1-deoxy-D-xylulose 5-phosphate + CO2. It participates in metabolic intermediate biosynthesis; 1-deoxy-D-xylulose 5-phosphate biosynthesis; 1-deoxy-D-xylulose 5-phosphate from D-glyceraldehyde 3-phosphate and pyruvate: step 1/1. Catalyzes the acyloin condensation reaction between C atoms 2 and 3 of pyruvate and glyceraldehyde 3-phosphate to yield 1-deoxy-D-xylulose-5-phosphate (DXP). In Dehalococcoides mccartyi (strain ATCC BAA-2266 / KCTC 15142 / 195) (Dehalococcoides ethenogenes (strain 195)), this protein is 1-deoxy-D-xylulose-5-phosphate synthase.